The following is a 542-amino-acid chain: Importin subunit alpha-1 (542 aa).

The tract at residues 1 to 29 (MSASSRFIPEHRRQNYKGKGTFQADELRR) is disordered. Positions 1–60 (MSASSRFIPEHRRQNYKGKGTFQADELRRRRETQQIEIRKQKREENLNKRRNLVDVQEPA) constitute an IBB domain. ARM repeat units lie at residues 114–155 (IQKV…SSNQ), 156–197 (THVV…SPMC), 198–240 (RDHV…KNPQ), 241–282 (PDWN…ANEK), 283–324 (IQAI…DDVQ), 325–366 (TQVI…NSSQ), 367–408 (IQYV…GARR), and 409–453 (PDQI…GELD).

Belongs to the importin alpha family. As to quaternary structure, interacts with pap1.

Its subcellular location is the nucleus. In terms of biological role, binds specifically and directly to substrates containing either a simple or bipartite NLS motif. Promotes docking of import substrates to the nuclear envelope. Seems to act as a cytosolic receptor for both simple and bipartite NLS motifs. Has an essential role in mitotic chromosome condensation. Involved in nuclear protein import. Required for efficient nuclear import of both an SV40 nuclear localization signal-containing reporter protein and the pap1 component of the stress response MAP kinase pathway. Required for proper mitotic progression. This is Importin subunit alpha-1 (cut15) from Schizosaccharomyces pombe (strain 972 / ATCC 24843) (Fission yeast).